Reading from the N-terminus, the 86-residue chain is SEED MATURATION PROTEIN 1 (86 aa).

Positions 52–86 are disordered; the sequence is RIEKGKEQSAASGDQTQIQRDIKDIKGTRTDDSPR. Residues 60–70 are compositionally biased toward polar residues; the sequence is SAASGDQTQIQ. Basic and acidic residues predominate over residues 71–86; the sequence is RDIKDIKGTRTDDSPR.

Belongs to the LEA type 3 family.

Its function is as follows. Protein chaperone involved in seed maturation and dormancy maintenance after high temperature fluctuation (e.g. secondary dormancy after 3 days at 40 degrees Celsius), probably by protecting heat labile proteins required for secondary dormancy (e.g. G6PDH, HOP3, SR45, ECP63, SCL33, RPL32B, ChlADR1, MSBP1, MBF1B, At3g01690, At1g15280, At1g15290, At2g31410, At1g11630, At1g65090, EMB2279, EMB1674 and RPL35C). This Arabidopsis thaliana (Mouse-ear cress) protein is SEED MATURATION PROTEIN 1.